Here is a 255-residue protein sequence, read N- to C-terminus: 5'-nucleotidase SurE (255 aa).

4 residues coordinate a divalent metal cation: Asp13, Asp14, Ser44, and Asn100.

The protein belongs to the SurE nucleotidase family. The cofactor is a divalent metal cation.

The protein localises to the cytoplasm. The enzyme catalyses a ribonucleoside 5'-phosphate + H2O = a ribonucleoside + phosphate. Functionally, nucleotidase that shows phosphatase activity on nucleoside 5'-monophosphates. This chain is 5'-nucleotidase SurE, found in Bacteroides fragilis (strain ATCC 25285 / DSM 2151 / CCUG 4856 / JCM 11019 / LMG 10263 / NCTC 9343 / Onslow / VPI 2553 / EN-2).